Consider the following 187-residue polypeptide: Hypoxanthine/guanine phosphoribosyltransferase (187 aa).

Belongs to the purine/pyrimidine phosphoribosyltransferase family. Archaeal HPRT subfamily. Homodimer.

The protein localises to the cytoplasm. The enzyme catalyses IMP + diphosphate = hypoxanthine + 5-phospho-alpha-D-ribose 1-diphosphate. The catalysed reaction is GMP + diphosphate = guanine + 5-phospho-alpha-D-ribose 1-diphosphate. Its pathway is purine metabolism; IMP biosynthesis via salvage pathway; IMP from hypoxanthine: step 1/1. In terms of biological role, catalyzes a salvage reaction resulting in the formation of IMP that is energically less costly than de novo synthesis. The protein is Hypoxanthine/guanine phosphoribosyltransferase of Methanopyrus kandleri (strain AV19 / DSM 6324 / JCM 9639 / NBRC 100938).